The sequence spans 568 residues: uncharacterized protein (568 aa).

This is an uncharacterized protein from Rickettsia prowazekii (strain Madrid E).